The primary structure comprises 362 residues: N-acylethanolamine-hydrolyzing acid amidase (362 aa).

The signal sequence occupies residues 1 to 33; it reads MGTLATRAACHGAHLALALLLLLSLSGPWLSAV. N-linked (GlcNAc...) asparagine glycans are attached at residues Asn42 and Asn112. Cys131 acts as the Nucleophile in catalysis. N-linked (GlcNAc...) asparagine glycosylation is found at Asn314 and Asn338.

It belongs to the acid ceramidase family. As to quaternary structure, heterodimer of an alpha and a beta subunit, produced by autocatalytic cleavage. N-glycosylated. Tunicamycin treatment causes a reduction in specific activity against N-palmitoylethanolamine. Post-translationally, autoproteolytic cleavage at pH 4.5 gives rise to the alpha and beta subunit. Cleavage gives rise to a conformation change that activates the enzyme. The same catalytic Cys residue mediates the autoproteolytic cleavage and subsequent hydrolysis of lipid substrates.

It localises to the lysosome. The protein localises to the membrane. It catalyses the reaction N-hexadecanoylethanolamine + H2O = ethanolamine + hexadecanoate. The enzyme catalyses an N-(long-chain fatty acyl)ethanolamine + H2O = a long-chain fatty acid + ethanolamine. It carries out the reaction N-dodecanoylethanolamine + H2O = dodecanoate + ethanolamine. The catalysed reaction is N-tetradecanoylethanolamine + H2O = tetradecanoate + ethanolamine. It catalyses the reaction an N-acylsphing-4-enine + H2O = sphing-4-enine + a fatty acid. The enzyme catalyses N-hexadecanoylsphing-4-enine + H2O = sphing-4-enine + hexadecanoate. It carries out the reaction N-dodecanoylsphing-4-enine + H2O = dodecanoate + sphing-4-enine. It participates in lipid metabolism; fatty acid metabolism. In terms of biological role, degrades bioactive fatty acid amides to their corresponding acids, with the following preference: N-palmitoylethanolamine &gt; N-myristoylethanolamine &gt; N-stearoylethanolamine &gt; N-oleoylethanolamine &gt; N-linoleoylethanolamine &gt; N-arachidonoylethanolamine. In Mus musculus (Mouse), this protein is N-acylethanolamine-hydrolyzing acid amidase.